A 401-amino-acid chain; its full sequence is MATKRSVGTLKEADLKGKSVFVRVDLNVPLDDNSNITDDTRIRAAVPTIKYLMGNGSRVVLCSHLGRPKGVTPKYSLKPLVPRLSELLGVEVVMANDSIGEEVQKLVAGLPEGGVLLLENVRFYAEEEKNDPEFAKKLAALADVYVNDAFGTAHRAHASTEGVAKFLKPSVAGFLMQKELDYLVGAVANPKKPFAAIVGGSKVSTKIGVIESLLNTVDILLLGGGMIFTFYKAQGLSVGSSLVEEDKLDLAKSLMEKAKAKGVSLLLPTDVVIADKFAPDANSKIVPATAIPDGWMGLDIGPDSIKTFSEALDTTKTIIWNGPMGVFEFDKFAAGTEAVAKQLAELSGKGVTTIIGGGDSVAAVEKVGLADKMSHISTGGGASLELLEGKPLPGVLALDEA.

(2R)-3-phosphoglycerate is bound by residues valine 24, aspartate 25, asparagine 27, arginine 41, serine 63, histidine 64, glycine 66, arginine 67, arginine 122, histidine 154, and arginine 155. Position 200 (glycine 200) interacts with ADP. Glycine 200 contacts CDP. AMP is bound by residues lysine 202 and lysine 206. Lysine 206 is an ATP binding site. ADP is bound at residue glycine 224. Glycine 224 provides a ligand contact to CDP. AMP is bound by residues glycine 225 and glycine 297. ATP contacts are provided by glycine 225, glycine 297, and asparagine 321. Residues glycine 322 and phenylalanine 327 each coordinate CDP. Phenylalanine 327 lines the ADP pocket. Glutamate 328 contributes to the AMP binding site. Residues glutamate 328, aspartate 359, and serine 360 each coordinate ATP. Aspartate 359 is a Mg(2+) binding site.

It belongs to the phosphoglycerate kinase family. As to quaternary structure, monomer. Mg(2+) serves as cofactor. Expressed in roots, leaves and inflorescence.

The protein localises to the cytoplasm. It catalyses the reaction (2R)-3-phosphoglycerate + ATP = (2R)-3-phospho-glyceroyl phosphate + ADP. It participates in carbohydrate degradation; glycolysis; pyruvate from D-glyceraldehyde 3-phosphate: step 2/5. The polypeptide is Phosphoglycerate kinase 3, cytosolic (Arabidopsis thaliana (Mouse-ear cress)).